Consider the following 402-residue polypeptide: Thyroid hormone receptor alpha (402 aa).

Residues 1-22 form a disordered region; sequence MEQKPSTLDPLSEPEDTRWLDG. A modulating region spans residues 1-50; the sequence is MEQKPSTLDPLSEPEDTRWLDGKRKRKSSQCLVKSSMSGYIPSYLDKDEQ. Ser12 bears the Phosphoserine; by CK2 mark. Ser28 is modified (phosphoserine). Positions 51, 54, 68, 71, 89, 95, 105, and 108 each coordinate Zn(2+). NR C4-type zinc fingers lie at residues 51–71 and 89–113; these read CVVC…CAGC and CKYD…FKKC. Residues 51 to 125 constitute a DNA-binding region (nuclear receptor); the sequence is CVVCGDKATG…VGMAMDLVLY (75 aa). Residues 161–402 form the NR LBD domain; sequence EEWELIHVVT…ELFPPLFLEV (242 aa). Residues Arg226 and Ser275 each contribute to the 3,3',5-triiodo-L-thyronine site.

This sequence belongs to the nuclear hormone receptor family. NR1 subfamily. In terms of assembly, probably interacts with SFPQ.

Its subcellular location is the nucleus. Functionally, nuclear hormone receptor that can act as a repressor or activator of transcription. High affinity receptor for thyroid hormones, including triiodothyronine and thyroxine. The polypeptide is Thyroid hormone receptor alpha (THRA) (Pygoscelis adeliae (Adelie penguin)).